The sequence spans 144 residues: Macromomycin (144 aa).

Residues 1–32 (MLQNTSRFLARAGATVGVAAGLAFSLPADRDG) form the signal peptide. 2 cysteine pairs are disulfide-bonded: cysteine 68–cysteine 78 and cysteine 120–cysteine 125.

This sequence belongs to the neocarzinostatin family.

Its function is as follows. Binds non-covalently to a chromophore which is the cytotoxic and mutagenic component of the antibiotic. The chromophore binds to DNA as a weak intercalator and causes single- and double-strand breaks. This Streptomyces macromomyceticus protein is Macromomycin.